The sequence spans 372 residues: Tribbles homolog 1 (372 aa).

2 disordered regions span residues 1 to 26 and 49 to 85; these read MRVG…FPAA and RLSE…CVSS. A compositionally biased stretch (pro residues) spans 59-74; that stretch reads YLSPPGSPCSPQPPPS. The Protein kinase domain occupies 91–338; the sequence is IADYLLLPLA…APQILLHPWF (248 aa). The short motif at 355-360 is the COP1-binding element; the sequence is DQIVPE.

Belongs to the protein kinase superfamily. CAMK Ser/Thr protein kinase family. Tribbles subfamily. As to quaternary structure, monomer. Interacts (via protein kinase domain) with CEBPA. Interacts with COP1.

Functionally, adapter protein involved in protein degradation by interacting with COP1 ubiquitin ligase. Promotes CEBPA degradation and inhibits its function. Controls macrophage, eosinophil and neutrophil differentiation via the COP1-binding domain. Regulates myeloid cell differentiation by altering the expression of CEBPA in a COP1-dependent manner. Interacts with MAPK kinases and regulates activation of MAP kinases, but has no kinase activity. This Mus musculus (Mouse) protein is Tribbles homolog 1.